The sequence spans 141 residues: Hemoglobin subunit alpha-D (141 aa).

Positions 1-141 (MLTAEDKKLI…VAAVLAGKYR (141 aa)) constitute a Globin domain. 2 residues coordinate heme b: histidine 58 and histidine 87.

The protein belongs to the globin family. Heterotetramer of two alpha-D chains and two beta chains. Red blood cells.

Its function is as follows. Involved in oxygen transport from the lung to the various peripheral tissues. The chain is Hemoglobin subunit alpha-D (HBAD) from Coturnix japonica (Japanese quail).